A 214-amino-acid chain; its full sequence is Adenylate kinase (214 aa).

10–15 (GAGKGT) provides a ligand contact to ATP. The tract at residues 30–59 (STGDMLRGAIKAGTDLGKQAKTLMDAGQLV) is NMP. Residues Thr31, Arg36, 57–59 (QLV), 85–88 (GFPR), and Gln92 each bind AMP. Positions 122–159 (GRRVHQASGRTYHVVYNPPKVEGKDDVTGEDLIIRADD) are LID. ATP-binding positions include Arg123 and 132-133 (TY). 2 residues coordinate AMP: Arg156 and Arg167. Lys200 provides a ligand contact to ATP.

Belongs to the adenylate kinase family. In terms of assembly, monomer.

The protein localises to the cytoplasm. The enzyme catalyses AMP + ATP = 2 ADP. It functions in the pathway purine metabolism; AMP biosynthesis via salvage pathway; AMP from ADP: step 1/1. Functionally, catalyzes the reversible transfer of the terminal phosphate group between ATP and AMP. Plays an important role in cellular energy homeostasis and in adenine nucleotide metabolism. This Pasteurella multocida (strain Pm70) protein is Adenylate kinase.